A 502-amino-acid polypeptide reads, in one-letter code: ATP synthase subunit alpha (502 aa).

ATP is bound at residue 169 to 176 (GDRQTGKT).

The protein belongs to the ATPase alpha/beta chains family. As to quaternary structure, F-type ATPases have 2 components, CF(1) - the catalytic core - and CF(0) - the membrane proton channel. CF(1) has five subunits: alpha(3), beta(3), gamma(1), delta(1), epsilon(1). CF(0) has three main subunits: a(1), b(2) and c(9-12). The alpha and beta chains form an alternating ring which encloses part of the gamma chain. CF(1) is attached to CF(0) by a central stalk formed by the gamma and epsilon chains, while a peripheral stalk is formed by the delta and b chains.

It is found in the cell inner membrane. It catalyses the reaction ATP + H2O + 4 H(+)(in) = ADP + phosphate + 5 H(+)(out). Functionally, produces ATP from ADP in the presence of a proton gradient across the membrane. The alpha chain is a regulatory subunit. This is ATP synthase subunit alpha from Nitratidesulfovibrio vulgaris (strain ATCC 29579 / DSM 644 / CCUG 34227 / NCIMB 8303 / VKM B-1760 / Hildenborough) (Desulfovibrio vulgaris).